The sequence spans 279 residues: Large ribosomal subunit protein uL2 (279 aa).

Disordered regions lie at residues 1-28 (MPARRYKPTSPGRRNSSVLTRDSVTKEK) and 221-279 (RGTV…GRRR). Residues 12–22 (GRRNSSVLTRD) show a composition bias toward polar residues.

This sequence belongs to the universal ribosomal protein uL2 family. In terms of assembly, part of the 50S ribosomal subunit. Forms a bridge to the 30S subunit in the 70S ribosome.

In terms of biological role, one of the primary rRNA binding proteins. Required for association of the 30S and 50S subunits to form the 70S ribosome, for tRNA binding and peptide bond formation. It has been suggested to have peptidyltransferase activity; this is somewhat controversial. Makes several contacts with the 16S rRNA in the 70S ribosome. The protein is Large ribosomal subunit protein uL2 of Rubrobacter xylanophilus (strain DSM 9941 / JCM 11954 / NBRC 16129 / PRD-1).